The sequence spans 190 residues: Potassium-transporting ATPase KdpC subunit (190 aa).

The helical transmembrane segment at 10–30 threads the bilayer; that stretch reads TFLFLLLITGGVYPLLTTALG.

The protein belongs to the KdpC family. In terms of assembly, the system is composed of three essential subunits: KdpA, KdpB and KdpC.

It localises to the cell inner membrane. Part of the high-affinity ATP-driven potassium transport (or Kdp) system, which catalyzes the hydrolysis of ATP coupled with the electrogenic transport of potassium into the cytoplasm. This subunit acts as a catalytic chaperone that increases the ATP-binding affinity of the ATP-hydrolyzing subunit KdpB by the formation of a transient KdpB/KdpC/ATP ternary complex. The protein is Potassium-transporting ATPase KdpC subunit of Escherichia coli (strain SMS-3-5 / SECEC).